Consider the following 143-residue polypeptide: Transcriptional regulator MraZ (143 aa).

SpoVT-AbrB domains follow at residues 5-47 (TFTP…PREE) and 76-119 (ADEQ…DAQA).

Belongs to the MraZ family. Forms oligomers.

The protein localises to the cytoplasm. It is found in the nucleoid. The protein is Transcriptional regulator MraZ of Corynebacterium urealyticum (strain ATCC 43042 / DSM 7109).